The following is a 194-amino-acid chain: Calcium channel flower (194 aa).

The Cytoplasmic segment spans residues 1–34 (MSFAEKITGLLARPNQQDPIGPEQPWYLKYGSRL). A helical membrane pass occupies residues 35–55 (LGIVAAFFAILFGLWNVFSII). Residues 56-65 (TLSVSCLVAG) lie on the Extracellular side of the membrane. The chain crosses the membrane as a helical span at residues 66-88 (ILQMVAGFVVMLLEAPCCFVCFG). Over 89 to 106 (QVNEIAEKVESKPLYFRA) the chain is Cytoplasmic. The chain crosses the membrane as a helical span at residues 107-127 (GLYIAMAIPPIILCFGLASLF). Over 128-194 (GSGLIFGTGV…TGAVGTDSNV (67 aa)) the chain is Extracellular. Important for promoting apoptosis stretches follow at residues 135–157 (TGVVYGMMALGKKASAEDMRAAA) and 135–192 (TGVV…GTDS).

This sequence belongs to the calcium channel flower family. In terms of assembly, associates with the dally/ magu complex. As to quaternary structure, homomultimer. Associates with the dally/ magu complex. As to expression, detected in the imaginal wing disk (at protein level). In terms of tissue distribution, detected throughout the adult brain, including the optic lobe but, at much lower levels of expression than isoform Lose-A. Detected in the optic lobe (at protein level). Detected throughout the adult brain, including the optic lobe. Expressed in damaged and undamaged optic lobe neurons. As to expression, expressed in optic lobe neurons, with higher levels of expression in suboptimal neurons. Specifically expressed in injury-damaged optic lobe neurons.

The protein localises to the cell membrane. It localises to the cytoplasmic vesicle. Its subcellular location is the secretory vesicle. It is found in the synaptic vesicle membrane. The protein resides in the presynaptic cell membrane. The protein localises to the endosome. It localises to the synaptic vesicle. With respect to regulation, channel activity is inhibited by La(3+), which reduces Ca(2+) influx and thus inhibits it's function in promoting activity-dependent bulk endocytosis (ADBE) in response to high stimuli. Functionally, transmembrane protein which mediates synaptic endocytosis, fitness-based cell culling, neuronal culling, morphogen gradient scaling, and calcium transport. Regulates synaptic endocytosis and hence couples exo- with endocytosis. Controls two major modes of synaptic vesicle (SV) endocytosis in the synaptic boutons of neuromuscular junctions (NMJs); Ca(2+) channel-independent Clathrin-mediated endocytosis (CME) in response to mild stimulation, and Ca(2+) channel-dependent activity-dependent bulk endocytosis (ADBE) in response to strong stimulation. Functions in ADBE and subsequent SV reformation from bulk endosomes by initiating Ca(2+) channel-dependent phosphatidylinositol 4,5-bisphosphate (PtdIns(4,5)P2) compartmentalization in synaptic boutons. There it acts at the periactive zone to provide the low Ca(2+) levels required to initiate Calcineurin activation and upregulate PtdIns(4,5)P2. Conversely PtdIns(4,5)P2 enhances fwe Ca(2+) channel-activity, establishing a positive feedback loop that induces PtdIns(4,5)P2 microdomain at the periactive zone. These microdomains trigger bulk membrane invagination (i.e. ADBE) by triggering actin polymerization while also promoting localization of fwe to bulk endosomes, thereby removing the ADBE trigger to reduce endocytosis and prevent excess membrane uptake. PtdIns(4,5)P2 then promotes SV reformation from the bulk endosomes, to coordinate ADBE and subsequent SV reformation. Different combinations of the flower isoforms at the cell membrane are also required for the identification and elimination of suboptimal or supernumerary cells during development, regeneration, and adulthood. Required for the recognition and elimination of unfit cells in the developing wing during cell competition. Also required for efficient identification and elimination of injured, damaged and/or dysfunctional neurons during regeneration of the adult brain. In the developing pupal retina, mediates the elimination of unwanted postmitotic neurons, including supernumerary photoreceptor neurons that form at the periphery of the retina and are contained within incomplete ommatidia units. Downstream of the flower fitness fingerprints, cells identified as unwanted or unfit are eliminated via apoptosis through the expression of ahuizotl (azot). However, the cells marked for elimination by the flower isoforms only undergo apoptosis if additional thresholds are met; (1) their neighboring fit/healthy cells express different levels of the fwe isoforms, and (2) the levels of the protective signal SPARC expressed by the loser or unwanted cells are unable to inhibit caspase activation. These additional thresholds for flower-mediated apoptosis, allows useful cells to recover from transient and limited stress before they are unnecessarily eliminated. Functions with dally and magu in a mechanism of scaling, which utilises apoptosis to ensure that the dpp morphogen gradient, which mediates organ growth, remains proportional to the size of the growing wing. In this mechanism, fwe represses dally- and Magu-dependent activity in expanding the gradient, and dally/Magu inhibits fwe-dependent apoptosis to keep cell death rate low. When the levels of these different proteins are optimally regulated the gradient correctly scales with organ growth but when this fails, fwe-mediated apoptosis is activated to trim the developing tissue to match the correct size of the gradient. Functions with the other flower isoforms to produce tissue-specific fitness fingerprints that identify unfit or fit cells during cell selection processes in order to maintain tissue health. In the wing imaginal disk, this isoform is highly expressed in healthy/normal cells but is down-regulated in cells with decreased fitness. During cell competition, if levels of this isoform in unfit cells is lower than in the surrounding neighboring cells, the suboptimal cells are recognized as 'loser' cells, and undergo elimination via apoptosis to be replaced by the surrounding healthy 'winner' cell population. Its function is as follows. Functions with the other flower isoforms to produce tissue-specific fitness fingerprints that identify unfit or fit cells during cell selection processes in order to maintain tissue health. In the wing imaginal disk, this isoform displays low levels of expression in healthy/normal cells but is up-regulated in cells with decreased fitness. During cell competition, if levels of this isoform in unfit cells is higher than in the surrounding neighboring cells, the suboptimal cells are recognized as 'loser' cells, and undergo elimination via apoptosis to be replaced by the surrounding healthy 'winner' cell population. In terms of biological role, functions with the other flower isoforms to produce tissue-specific fitness fingerprints that identify unfit cells for cell selection processes during development, regeneration, and to maintain tissue health. During cell competition in certain tissues, marks suboptimal or damaged cells as 'loser' cells. In cells of the wing imaginal disk and damaged or dysfunctional neurons in the adult optic lobe, this isoform displays low to no expression in healthy/normal cells but is up-regulated in cells with decreased fitness or damage-affected neurons. During cell competition, if levels of this isoform in unfit cells is higher than in the surrounding neighboring cells, the suboptimal cells are recognized as 'loser' cells, and undergo elimination via apoptosis to be replaced by the surrounding healthy/undamaged 'winner' cell population. In the developing pupal retina, also required for the recognition and elimination of postmitotic neurons, including supernumerary photoreceptor neurons that form at the periphery of the retina and are contained within incomplete ommatidia units. Activity at the peripheral retina is induced by the wg signaling pathway but, once activated, it promotes apoptosis of supernumerary photoreceptor neurons independently of wg signaling and snail function. This Drosophila melanogaster (Fruit fly) protein is Calcium channel flower (fwe).